We begin with the raw amino-acid sequence, 313 residues long: Ribosomal RNA small subunit methyltransferase H (313 aa).

Residues 35–37 (GGH), Asp55, Phe79, Asp100, and Gln107 contribute to the S-adenosyl-L-methionine site.

Belongs to the methyltransferase superfamily. RsmH family.

Its subcellular location is the cytoplasm. It carries out the reaction cytidine(1402) in 16S rRNA + S-adenosyl-L-methionine = N(4)-methylcytidine(1402) in 16S rRNA + S-adenosyl-L-homocysteine + H(+). Its function is as follows. Specifically methylates the N4 position of cytidine in position 1402 (C1402) of 16S rRNA. The polypeptide is Ribosomal RNA small subunit methyltransferase H (Burkholderia mallei (strain NCTC 10247)).